Here is a 538-residue protein sequence, read N- to C-terminus: Cytochrome P450 52-M1 (538 aa).

Residues 18–38 form a helical membrane-spanning segment; the sequence is GLLPLLFVAFLVLHEPIWLLW. Cys-484 lines the heme pocket.

It belongs to the cytochrome P450 family. It depends on heme as a cofactor.

The protein resides in the membrane. It catalyses the reaction an omega-methyl-long-chain fatty acid + reduced [NADPH--hemoprotein reductase] + O2 = an omega-hydroxy-long-chain fatty acid + oxidized [NADPH--hemoprotein reductase] + H2O + H(+). The enzyme catalyses an (omega-1)-ethyl fatty acid + reduced [NADPH--hemoprotein reductase] + O2 = an (omega-1)-hydroxy-long-chain fatty acid + oxidized [NADPH--hemoprotein reductase] + H2O + H(+). The catalysed reaction is (9Z)-octadecenoate + reduced [NADPH--hemoprotein reductase] + O2 = 18-hydroxy-(9Z)-octadecenoate + oxidized [NADPH--hemoprotein reductase] + H2O + H(+). It carries out the reaction (9Z)-octadecenoate + reduced [NADPH--hemoprotein reductase] + O2 = 17-hydroxy-(9Z)-octadecenoate + oxidized [NADPH--hemoprotein reductase] + H2O + H(+). It catalyses the reaction (9Z,12Z)-octadecadienoate + reduced [NADPH--hemoprotein reductase] + O2 = 18-hydroxy-(9Z,12Z)-octadecadienoate + oxidized [NADPH--hemoprotein reductase] + H2O + H(+). The enzyme catalyses (9Z,12Z)-octadecadienoate + reduced [NADPH--hemoprotein reductase] + O2 = 17-hydroxy-(9Z,12Z)-octadecadienoate + oxidized [NADPH--hemoprotein reductase] + H2O + H(+). The catalysed reaction is hexadecanoate + reduced [NADPH--hemoprotein reductase] + O2 = 16-hydroxyhexadecanoate + oxidized [NADPH--hemoprotein reductase] + H2O + H(+). It carries out the reaction (9Z)-hexadecenoate + reduced [NADPH--hemoprotein reductase] + O2 = (9Z)-16-hydroxyhexadec-9-enoate + oxidized [NADPH--hemoprotein reductase] + H2O + H(+). It catalyses the reaction octadecanoate + reduced [NADPH--hemoprotein reductase] + O2 = 18-hydroxyoctadecanoate + oxidized [NADPH--hemoprotein reductase] + H2O + H(+). Catalyzes the first step of sophorolipid biosynthesis. Catalyzes the terminal (at the omega-position) or subterminal (at the omega(-1)-position) hydroxylation of a fatty acid. This converts the fatty acid to a substrate for the subsequent glycosyltransferase reactions. Oleic acid is the preferred substrate, but it acts on various other C-16, C-18 and C-20 saturated and unsaturated fatty acids, namely palmitic, palmitoleic, stearic, linoleic, cis-9,10-epoxystearic, trans-9,10-epoxystearic and arachidonic acid. The polypeptide is Cytochrome P450 52-M1 (Starmerella bombicola (Yeast)).